The primary structure comprises 365 residues: Methylthioribose-1-phosphate isomerase (365 aa).

Substrate contacts are provided by residues 53–55 (RGA), Arg-90, and Gln-201. Asp-242 acts as the Proton donor in catalysis. Residue 252-253 (NK) coordinates substrate.

The protein belongs to the eIF-2B alpha/beta/delta subunits family. MtnA subfamily.

It catalyses the reaction 5-(methylsulfanyl)-alpha-D-ribose 1-phosphate = 5-(methylsulfanyl)-D-ribulose 1-phosphate. It functions in the pathway amino-acid biosynthesis; L-methionine biosynthesis via salvage pathway; L-methionine from S-methyl-5-thio-alpha-D-ribose 1-phosphate: step 1/6. In terms of biological role, catalyzes the interconversion of methylthioribose-1-phosphate (MTR-1-P) into methylthioribulose-1-phosphate (MTRu-1-P). This chain is Methylthioribose-1-phosphate isomerase, found in Methylorubrum extorquens (strain CM4 / NCIMB 13688) (Methylobacterium extorquens).